The following is a 268-amino-acid chain: Tropinone reductase homolog At2g29170 (268 aa).

Position 22–46 (22–46 (LVTGGSKGLGEAVVEELAMLGARVH)) interacts with NADP(+). Position 155 (S155) interacts with substrate. Y168 (proton acceptor) is an active-site residue.

The protein belongs to the short-chain dehydrogenases/reductases (SDR) family. SDR65C subfamily.

The chain is Tropinone reductase homolog At2g29170 from Arabidopsis thaliana (Mouse-ear cress).